The chain runs to 439 residues: Type I secretion system membrane fusion protein PrsE (439 aa).

The chain crosses the membrane as a helical span at residues 20–40 (LIGVSVLALALVAGVGGWAAT).

Belongs to the membrane fusion protein (MFP) (TC 8.A.1) family. In terms of assembly, part of a type I secretion system composed of PrsD and PrsE.

The protein localises to the cell inner membrane. In terms of biological role, mediates secretion of glycanase ExsH. This Rhizobium meliloti (strain 1021) (Ensifer meliloti) protein is Type I secretion system membrane fusion protein PrsE (prsE).